Reading from the N-terminus, the 330-residue chain is Aspartate--ammonia ligase (330 aa).

The protein belongs to the class-II aminoacyl-tRNA synthetase family. AsnA subfamily.

The protein resides in the cytoplasm. It catalyses the reaction L-aspartate + NH4(+) + ATP = L-asparagine + AMP + diphosphate + H(+). It functions in the pathway amino-acid biosynthesis; L-asparagine biosynthesis; L-asparagine from L-aspartate (ammonia route): step 1/1. The chain is Aspartate--ammonia ligase from Streptococcus pyogenes serotype M2 (strain MGAS10270).